The primary structure comprises 208 residues: Thymidylate kinase (208 aa).

7–14 contacts ATP; that stretch reads GIDGAGKT.

This sequence belongs to the thymidylate kinase family.

It catalyses the reaction dTMP + ATP = dTDP + ADP. In terms of biological role, phosphorylation of dTMP to form dTDP in both de novo and salvage pathways of dTTP synthesis. This chain is Thymidylate kinase, found in Xylella fastidiosa (strain Temecula1 / ATCC 700964).